The following is a 466-amino-acid chain: 3-isopropylmalate dehydratase large subunit (466 aa).

[4Fe-4S] cluster is bound by residues Cys-347, Cys-407, and Cys-410.

It belongs to the aconitase/IPM isomerase family. LeuC type 1 subfamily. As to quaternary structure, heterodimer of LeuC and LeuD. It depends on [4Fe-4S] cluster as a cofactor.

The catalysed reaction is (2R,3S)-3-isopropylmalate = (2S)-2-isopropylmalate. It participates in amino-acid biosynthesis; L-leucine biosynthesis; L-leucine from 3-methyl-2-oxobutanoate: step 2/4. Functionally, catalyzes the isomerization between 2-isopropylmalate and 3-isopropylmalate, via the formation of 2-isopropylmaleate. In Escherichia coli O17:K52:H18 (strain UMN026 / ExPEC), this protein is 3-isopropylmalate dehydratase large subunit.